The sequence spans 131 residues: MSAKAEKKPASKAPAEKKPAAKKTAPSSDGKKRTKARKETYSSYIYKVLKQTHPDTGISQKSMSILNSFVNDIFERIASEASKLAAYNKKSTISAREIQTAVRLILPGELAKHAVSEGTRAVTKYSSSTQA.

The span at 1 to 19 (MSAKAEKKPASKAPAEKKP) shows a compositional bias: basic and acidic residues. The tract at residues 1–38 (MSAKAEKKPASKAPAEKKPAAKKTAPSSDGKKRTKARK) is disordered. N6-acetyllysine; alternate is present on residues lysine 7 and lysine 8. Residues lysine 7 and lysine 8 each participate in a glycyl lysine isopeptide (Lys-Gly) (interchain with G-Cter in SUMO); alternate cross-link. Serine 11 is modified (phosphoserine). At lysine 12 the chain carries N6-acetyllysine. Lysine 17 bears the N6-acetyllysine; alternate mark. Residue lysine 17 forms a Glycyl lysine isopeptide (Lys-Gly) (interchain with G-Cter in SUMO); alternate linkage. A Glycyl lysine isopeptide (Lys-Gly) (interchain with G-Cter in SUMO) cross-link involves residue lysine 18. Lysine 124 participates in a covalent cross-link: Glycyl lysine isopeptide (Lys-Gly) (interchain with G-Cter in ubiquitin).

This sequence belongs to the histone H2B family. In terms of assembly, the nucleosome is a histone octamer containing two molecules each of H2A, H2B, H3 and H4 assembled in one H3-H4 heterotetramer and two H2A-H2B heterodimers. The octamer wraps approximately 147 bp of DNA. Post-translationally, monoubiquitinated by the UBC2-BRE1 complex to form H2BK123ub1. H2BK123ub1 gives a specific tag for epigenetic transcriptional activation and is also prerequisite for H3K4me and H3K79me formation. H2BK123ub1 also modulates the formation of double-strand breaks during meiosis and is a prerequisite for DNA-damage checkpoint activation. In terms of processing, phosphorylated by STE20 to form H2BS10ph during progression through meiotic prophase. May be correlated with chromosome condensation. Acetylated by GCN5 to form H2BK11ac and H2BK16ac. H2BK16ac can also be formed by ESA1. Acetylation of N-terminal lysines and particularly formation of H2BK11acK16ac has a positive effect on transcription. Post-translationally, sumoylation to form H2BK6su or H2BK7su, and probably also H2BK16su or H2BK17su, occurs preferentially near the telomeres and represses gene transcription.

The protein resides in the nucleus. The protein localises to the chromosome. In terms of biological role, core component of nucleosome. Nucleosomes wrap and compact DNA into chromatin, limiting DNA accessibility to the cellular machineries which require DNA as a template. Histones thereby play a central role in transcription regulation, DNA repair, DNA replication and chromosomal stability. DNA accessibility is regulated via a complex set of post-translational modifications of histones, also called histone code, and nucleosome remodeling. In Candida glabrata (strain ATCC 2001 / BCRC 20586 / JCM 3761 / NBRC 0622 / NRRL Y-65 / CBS 138) (Yeast), this protein is Histone H2B.2 (HTB2).